Reading from the N-terminus, the 375-residue chain is Stomatin-2 (375 aa).

The tract at residues 1–75 (MKTQPSEESA…IPVPTGQPRG (75 aa)) is disordered. Positions 11–50 (SPAPVNPGNSGNSGNRRASSTRISFSDQLDGGDSGDSSSN) are enriched in low complexity. The helical transmembrane segment at 120–140 (GLGFCGWFLMGLSWIMVISTF) threads the bilayer.

The protein belongs to the band 7/mec-2 family.

It localises to the membrane. Functionally, may be involved in cilia-related function. This chain is Stomatin-2 (sto-2), found in Caenorhabditis elegans.